We begin with the raw amino-acid sequence, 74 residues long: Conotoxin AbVIH (74 aa).

A signal peptide spans 1-17 (VLIIAVLFLTACQLTTA). A propeptide spanning residues 18 to 40 (ETSSRGKQKHRALRSTDKDSRMT) is cleaved from the precursor. The segment at 19–40 (TSSRGKQKHRALRSTDKDSRMT) is disordered. Cystine bridges form between cysteine 43–cysteine 57, cysteine 50–cysteine 61, and cysteine 56–cysteine 68.

This sequence belongs to the conotoxin O1 superfamily. Expressed by the venom duct.

The protein resides in the secreted. In Conus abbreviatus (Abbreviated cone), this protein is Conotoxin AbVIH.